We begin with the raw amino-acid sequence, 198 residues long: Photosystem I assembly protein Ycf4 (198 aa).

Residues 1 to 20 are disordered; it reads MTASTTINKGDSPNGDSSAS. The next 2 membrane-spanning stretches (helical) occupy residues 36–58 and 78–100; these read YWWA…SSYL and LVMG…VILW.

It belongs to the Ycf4 family.

The protein localises to the cellular thylakoid membrane. Seems to be required for the assembly of the photosystem I complex. The sequence is that of Photosystem I assembly protein Ycf4 from Nostoc sp. (strain PCC 7120 / SAG 25.82 / UTEX 2576).